The chain runs to 163 residues: SsrA-binding protein (163 aa).

The span at arginine 140–leucine 157 shows a compositional bias: basic and acidic residues. Positions arginine 140–arginine 163 are disordered.

It belongs to the SmpB family.

The protein localises to the cytoplasm. In terms of biological role, required for rescue of stalled ribosomes mediated by trans-translation. Binds to transfer-messenger RNA (tmRNA), required for stable association of tmRNA with ribosomes. tmRNA and SmpB together mimic tRNA shape, replacing the anticodon stem-loop with SmpB. tmRNA is encoded by the ssrA gene; the 2 termini fold to resemble tRNA(Ala) and it encodes a 'tag peptide', a short internal open reading frame. During trans-translation Ala-aminoacylated tmRNA acts like a tRNA, entering the A-site of stalled ribosomes, displacing the stalled mRNA. The ribosome then switches to translate the ORF on the tmRNA; the nascent peptide is terminated with the 'tag peptide' encoded by the tmRNA and targeted for degradation. The ribosome is freed to recommence translation, which seems to be the essential function of trans-translation. This is SsrA-binding protein from Anaeromyxobacter dehalogenans (strain 2CP-C).